Reading from the N-terminus, the 481-residue chain is Transcription factor TGA9 (481 aa).

The disordered stretch occupies residues 91 to 181; the sequence is QTLPTESSKS…GKQLDAKTLR (91 aa). Over residues 97 to 109 the composition is skewed to low complexity; it reads SSKSGGESSDSGS. Residues 110-126 show a composition bias toward polar residues; that stretch reads ANFSGKAESQQPESPMS. A compositionally biased stretch (low complexity) spans 143–155; sequence SSSTSGLPSTSRT. Residues 165–172 carry the Nuclear localization signal motif; the sequence is KRKATTSG. The bZIP domain maps to 176 to 220; it reads DAKTLRRLAQNREAARKSRLRKKAYVQQLESSRIKLSQLEQELQR. Residues 178 to 198 form a basic motif region; sequence KTLRRLAQNREAARKSRLRKK. Positions 204–218 are leucine-zipper; the sequence is LESSRIKLSQLEQEL. Residues 242–450 form the DOG1 domain; the sequence is AAIFDMEYGR…RALSSLWLSR (209 aa).

It belongs to the bZIP family. As to quaternary structure, homodimer. Binds DNA as a dimer. Interacts with floral glutaredoxins GRXC7/ROXY1 and GRXC8/ROXY2 in the nucleus. Interacts with TGA1, TGA2, TGA3, TGA4, TGA5, TGA6, TGA7, TGA10 and PAN. In terms of tissue distribution, mostly expressed in stems, inflorescence apex and flowers, and, to a lower extent, in seedlings, leaves and siliques.

It is found in the nucleus. Its function is as follows. Together with TGA10, basic leucine-zipper transcription factor required for anther development, probably via the activation of SPL expression in anthers and via the regulation of genes with functions in early and middle tapetal development. Required for signaling responses to pathogen-associated molecular patterns (PAMPs) such as flg22 that involves chloroplastic reactive oxygen species (ROS) production and subsequent expression of H(2)O(2)-responsive genes. This Arabidopsis thaliana (Mouse-ear cress) protein is Transcription factor TGA9.